Consider the following 248-residue polypeptide: Granulin (248 aa).

The protein belongs to the polyhedrin family.

Its function is as follows. Component of the virus occlusion bodies, which are large proteinaceous structures, that protect the virus from the outside environment for extended periods until they are ingested by insect larvae. The chain is Granulin from Choristoneura fumiferana (Spruce budworm moth).